Reading from the N-terminus, the 403-residue chain is L-cysteine:1D-myo-inositol 2-amino-2-deoxy-alpha-D-glucopyranoside ligase (403 aa).

Cys-43 is a binding site for Zn(2+). L-cysteinyl-5'-AMP is bound by residues 43–46, Thr-58, and 81–83; these read CGIT and NTT. Positions 45-55 match the 'HIGH' region motif; sequence ITPYDATHLGH. Positions 183 to 188 match the 'ERGGDP' region motif; it reads ERGGDP. Residue Trp-223 coordinates L-cysteinyl-5'-AMP. A Zn(2+)-binding site is contributed by Cys-227. 245–247 is an L-cysteinyl-5'-AMP binding site; it reads GSD. His-252 lines the Zn(2+) pocket. Val-279 lines the L-cysteinyl-5'-AMP pocket. The 'KMSKS' region motif lies at 285–289; it reads KMSKS.

It belongs to the class-I aminoacyl-tRNA synthetase family. MshC subfamily. As to quaternary structure, monomer. Zn(2+) serves as cofactor.

The catalysed reaction is 1D-myo-inositol 2-amino-2-deoxy-alpha-D-glucopyranoside + L-cysteine + ATP = 1D-myo-inositol 2-(L-cysteinylamino)-2-deoxy-alpha-D-glucopyranoside + AMP + diphosphate + H(+). In terms of biological role, catalyzes the ATP-dependent condensation of GlcN-Ins and L-cysteine to form L-Cys-GlcN-Ins. This Thermobispora bispora (strain ATCC 19993 / DSM 43833 / CBS 139.67 / JCM 10125 / KCTC 9307 / NBRC 14880 / R51) protein is L-cysteine:1D-myo-inositol 2-amino-2-deoxy-alpha-D-glucopyranoside ligase.